We begin with the raw amino-acid sequence, 332 residues long: L-lactate dehydrogenase A chain (332 aa).

Residues 29 to 57 (GMVGMASAISILLKDLCDELALVDVMEDK) and arginine 99 contribute to the NAD(+) site. Substrate-binding residues include arginine 106, asparagine 138, and arginine 169. Position 138 (asparagine 138) interacts with NAD(+). Histidine 193 (proton acceptor) is an active-site residue. Position 248 (threonine 248) interacts with substrate.

The protein belongs to the LDH/MDH superfamily. LDH family. In terms of assembly, homotetramer.

It is found in the cytoplasm. It catalyses the reaction (S)-lactate + NAD(+) = pyruvate + NADH + H(+). Its pathway is fermentation; pyruvate fermentation to lactate; (S)-lactate from pyruvate: step 1/1. Its function is as follows. Interconverts simultaneously and stereospecifically pyruvate and lactate with concomitant interconversion of NADH and NAD(+). This is L-lactate dehydrogenase A chain (ldha) from Rhinogobiops nicholsii (Blackeye goby).